A 460-amino-acid polypeptide reads, in one-letter code: Vitamin K-dependent protein C (460 aa).

The first 18 residues, 1 to 18 (MWQFRVFLLLMSTWGISS), serve as a signal peptide directing secretion. Residues 19-41 (IPAHPDPVFSSSEHAHQVLRVRR) constitute a propeptide that is removed on maturation. The Gla domain occupies 42–87 (ANSFLEEMRPGSLERECMEEICDFEEAQEIFQNVEDTLAFWIKYFD). A 4-carboxyglutamate mark is found at Glu47, Glu48, Glu55, Glu57, Glu60, Glu61, Glu66, Glu67, Glu70, and Glu76. A disulfide bridge connects residues Cys58 and Cys63. 9 cysteine pairs are disulfide-bonded: Cys91–Cys110, Cys100–Cys105, Cys104–Cys119, Cys121–Cys130, Cys139–Cys150, Cys146–Cys159, Cys161–Cys174, Cys182–Cys319, and Cys238–Cys254. EGF-like domains lie at 96–131 (LDHQ…KFCQ) and 135–175 (RFQD…MRCK). Asp112 bears the (3R)-3-hydroxyaspartate mark. In terms of domain architecture, Peptidase S1 spans 213–449 (VNGTLTKQGD…YLKWIHSYIG (237 aa)). Asn214 carries an N-linked (GlcNAc...) asparagine glycan. Residue His253 is the Charge relay system of the active site. Asn290 carries N-linked (GlcNAc...) asparagine glycosylation. The active-site Charge relay system is Asp299. Asn354 carries an N-linked (GlcNAc...) asparagine glycan. Disulfide bonds link Cys372–Cys386 and Cys397–Cys425. The Charge relay system role is filled by Ser401.

The protein belongs to the peptidase S1 family. Synthesized as a single chain precursor, which is cleaved into a light chain and a heavy chain held together by a disulfide bond. The enzyme is then activated by thrombin, which cleaves a tetradecapeptide from the amino end of the heavy chain; this reaction, which occurs at the surface of endothelial cells, is strongly promoted by thrombomodulin. In terms of processing, the vitamin K-dependent, enzymatic carboxylation of some Glu residues allows the modified protein to bind calcium. The iron and 2-oxoglutarate dependent 3-hydroxylation of aspartate and asparagine is (R) stereospecific within EGF domains. As to expression, plasma; synthesized in the liver.

The protein resides in the secreted. The protein localises to the golgi apparatus. It localises to the endoplasmic reticulum. It catalyses the reaction Degradation of blood coagulation factors Va and VIIIa.. Functionally, protein C is a vitamin K-dependent serine protease that regulates blood coagulation by inactivating factors Va and VIIIa in the presence of calcium ions and phospholipids. Exerts a protective effect on the endothelial cell barrier function. The sequence is that of Vitamin K-dependent protein C (Proc) from Mus musculus (Mouse).